Here is a 435-residue protein sequence, read N- to C-terminus: Uracil permease (435 aa).

Transmembrane regions (helical) follow at residues 17–37 (FSWV…TILV), 42–62 (GMSP…YLLI), 67–87 (IPAY…VKAT), 91–111 (GAAM…ALLI), 122–142 (ILPP…LAST), 161–181 (LKHF…AIFL), 191–213 (LIGI…QPVL), 234–254 (VTLG…SEHI), 311–331 (VFSV…GFIG), 336–356 (LISS…FGII), 376–396 (NLII…IQVS), and 399–419 (GFQV…NLIL).

It belongs to the nucleobase:cation symporter-2 (NCS2) (TC 2.A.40) family.

The protein resides in the cell membrane. Transport of uracil in the cell. This Bacillus subtilis (strain 168) protein is Uracil permease (pyrP).